We begin with the raw amino-acid sequence, 675 residues long: 1,4-alpha-glucan branching enzyme TK1436 (675 aa).

Glu183 serves as the catalytic Nucleophile. The substrate site is built by Arg261 and Gly278. The active-site Proton donor is Asp354. Residues Trp407, Asp467, and Gln476 each contribute to the substrate site. Disordered stretches follow at residues 537–563 and 581–627; these read PELEEYVEPPEVPPEKEETEEKPKVLT and EETR…LSIK. 2 stretches are compositionally biased toward basic and acidic residues: residues 549-563 and 581-595; these read PPEKEETEEKPKVLT and EETREVKKKAVEASK. Residues 596–616 are compositionally biased toward basic residues; sequence RGKRKSSKSKRLPRKVSKKAP.

It belongs to the glycosyl hydrolase 57 family. As to quaternary structure, monomer.

The enzyme catalyses Transfers a segment of a (1-&gt;4)-alpha-D-glucan chain to a primary hydroxy group in a similar glucan chain.. Functionally, catalyzes the formation of branch points in alpha-glucans by cleavage of an alpha-1,4 glycosidic bond and subsequent transfer of the cleaved-off oligosaccharide to a new alpha-1,6 position. The branch chain-length distribution of the reaction products shows degree of polymerization (DP) of 5 to 30, with two local maxima at DP 6 and DP 11. Exhibits an alpha-retaining catalytic mechanism. Does not display alpha-galactosidase or pullulanase activity, since melibiose and pullulan are not substrates. Is not able to catalyze the hydrolysis or transglycosylation of maltoheptaose, suggesting that the TK1436 protein contains neither alpha-amylase nor 4-alpha-glucanotransferase activity. This Thermococcus kodakarensis (strain ATCC BAA-918 / JCM 12380 / KOD1) (Pyrococcus kodakaraensis (strain KOD1)) protein is 1,4-alpha-glucan branching enzyme TK1436.